We begin with the raw amino-acid sequence, 184 residues long: Large ribosomal subunit protein uL18 (184 aa).

The protein belongs to the universal ribosomal protein uL18 family. In terms of assembly, part of the 50S ribosomal subunit. Contacts the 5S and 23S rRNAs.

This is one of the proteins that bind and probably mediate the attachment of the 5S RNA into the large ribosomal subunit, where it forms part of the central protuberance. The protein is Large ribosomal subunit protein uL18 (rpl18) of Haloferax volcanii (strain ATCC 29605 / DSM 3757 / JCM 8879 / NBRC 14742 / NCIMB 2012 / VKM B-1768 / DS2) (Halobacterium volcanii).